Reading from the N-terminus, the 314-residue chain is Ribosomal protein L11 methyltransferase (314 aa).

Residues Thr161, Gly182, Asp204, and Asn248 each contribute to the S-adenosyl-L-methionine site.

It belongs to the methyltransferase superfamily. PrmA family.

Its subcellular location is the cytoplasm. It carries out the reaction L-lysyl-[protein] + 3 S-adenosyl-L-methionine = N(6),N(6),N(6)-trimethyl-L-lysyl-[protein] + 3 S-adenosyl-L-homocysteine + 3 H(+). In terms of biological role, methylates ribosomal protein L11. The chain is Ribosomal protein L11 methyltransferase from Listeria monocytogenes serotype 4a (strain HCC23).